Consider the following 299-residue polypeptide: Ribosomal protein L11 methyltransferase (299 aa).

Residues Thr-152, Gly-172, Asp-194, and Asn-234 each contribute to the S-adenosyl-L-methionine site.

This sequence belongs to the methyltransferase superfamily. PrmA family.

Its subcellular location is the cytoplasm. The enzyme catalyses L-lysyl-[protein] + 3 S-adenosyl-L-methionine = N(6),N(6),N(6)-trimethyl-L-lysyl-[protein] + 3 S-adenosyl-L-homocysteine + 3 H(+). Its function is as follows. Methylates ribosomal protein L11. The protein is Ribosomal protein L11 methyltransferase of Geobacter metallireducens (strain ATCC 53774 / DSM 7210 / GS-15).